Here is a 573-residue protein sequence, read N- to C-terminus: Sulfate adenylyltransferase (573 aa).

The interval 1-169 (MANSPHGGVL…IEAVNKLNHY (169 aa)) is N-terminal. A catalytic region spans residues 170-394 (DYVALRYTPA…LRESSPPRHT (225 aa)). Gln-197 provides a ligand contact to sulfate. ATP-binding positions include 197 to 200 (QTRN) and 291 to 294 (GRDH). Residues Thr-198, Arg-199, and Asn-200 contribute to the active site. Arg-199 is a binding site for sulfate. Residue Ala-295 participates in sulfate binding. Val-333 is a binding site for ATP. The interval 395 to 573 (QGFTVFLTGY…LETEGFFDRA (179 aa)) is allosteric regulation domain; adenylyl-sulfate kinase-like. 3'-phosphoadenylyl sulfate is bound by residues 434–437 (DTVR), Arg-451, 477–478 (IA), and Arg-515.

In the N-terminal section; belongs to the sulfate adenylyltransferase family. It in the C-terminal section; belongs to the APS kinase family. Homohexamer. Dimer of trimers.

It localises to the cytoplasm. It carries out the reaction sulfate + ATP + H(+) = adenosine 5'-phosphosulfate + diphosphate. It participates in sulfur metabolism; hydrogen sulfide biosynthesis; sulfite from sulfate: step 1/3. With respect to regulation, allosterically inhibited by 3'-phosphoadenosine 5'-phosphosulfate (PAPS). In terms of biological role, catalyzes the first intracellular reaction of sulfate assimilation, forming adenosine-5'-phosphosulfate (APS) from inorganic sulfate and ATP. Plays an important role in sulfate activation as a component of the biosynthesis pathway of sulfur-containing amino acids. In Aspergillus oryzae (strain ATCC 42149 / RIB 40) (Yellow koji mold), this protein is Sulfate adenylyltransferase.